Consider the following 611-residue polypeptide: Dihydroxy-acid dehydratase (611 aa).

Asp81 contacts Mg(2+). Cys122 contributes to the [2Fe-2S] cluster binding site. 2 residues coordinate Mg(2+): Asp123 and Lys124. Lys124 is subject to N6-carboxylysine. Cys195 is a [2Fe-2S] cluster binding site. Glu491 is a binding site for Mg(2+). Ser517 acts as the Proton acceptor in catalysis.

The protein belongs to the IlvD/Edd family. As to quaternary structure, homodimer. The cofactor is [2Fe-2S] cluster. Mg(2+) is required as a cofactor.

The catalysed reaction is (2R)-2,3-dihydroxy-3-methylbutanoate = 3-methyl-2-oxobutanoate + H2O. It catalyses the reaction (2R,3R)-2,3-dihydroxy-3-methylpentanoate = (S)-3-methyl-2-oxopentanoate + H2O. It participates in amino-acid biosynthesis; L-isoleucine biosynthesis; L-isoleucine from 2-oxobutanoate: step 3/4. It functions in the pathway amino-acid biosynthesis; L-valine biosynthesis; L-valine from pyruvate: step 3/4. Its function is as follows. Functions in the biosynthesis of branched-chain amino acids. Catalyzes the dehydration of (2R,3R)-2,3-dihydroxy-3-methylpentanoate (2,3-dihydroxy-3-methylvalerate) into 2-oxo-3-methylpentanoate (2-oxo-3-methylvalerate) and of (2R)-2,3-dihydroxy-3-methylbutanoate (2,3-dihydroxyisovalerate) into 2-oxo-3-methylbutanoate (2-oxoisovalerate), the penultimate precursor to L-isoleucine and L-valine, respectively. This is Dihydroxy-acid dehydratase from Pasteurella multocida (strain Pm70).